A 534-amino-acid polypeptide reads, in one-letter code: MDGVSPKFVLPETFDGVRMEITGQLGMIWELVKAPVIVPLLQLAVYICLLMSVMLLCERVYMGIVIVLVKLFWKKPDKRYKFEPIHDDEELGSSNFPVVLVQIPMFNEREVYKLSIGAACGLSWPSDRLVIQVLDDSTDPTVKQMVEVECQRWASKGINIRYQIRENRVGYKAGALKEGLKRSYVKHCEYVVIFDADFQPEPDFLRRSIPFLMHNPNIALVQARWRFVNSDECLLTRMQEMSLDYHFTVEQEVGSSTHAFFGFNGTAGIWRIAAINEAGGWKDRTTVEDMDLAVRASLRGWKFLYLGDLQVKSELPSTFRAFRFQQHRWSCGPANLFRKMVMEIVRNKKVRFWKKVYVIYSFFFVRKIIAHWVTFCFYCVVLPLTILVPEVKVPIWGSVYIPSIITILNSVGTPRSIHLLFYWILFENVMSLHRTKATLIGLFEAGRANEWVVTAKLGSGQSAKGNTKGIKRFPRIFKLPDRLNTLELGFAAFLFVCGCYDFVHGKNNYFIYLFLQTMSFFISGLGWIGTYVPS.

Residues 36 to 56 (VIVPLLQLAVYICLLMSVMLL) form a helical membrane-spanning segment. Residue aspartate 136 is part of the active site. 2 residues coordinate substrate: aspartate 195 and aspartate 197. Aspartate 289 is an active-site residue. Helical transmembrane passes span 368-388 (IIAHWVTFCFYCVVLPLTILV), 404-426 (IITILNSVGTPRSIHLLFYWILF), 483-503 (LNTLELGFAAFLFVCGCYDFV), and 509-529 (YFIYLFLQTMSFFISGLGWIG).

This sequence belongs to the glycosyltransferase 2 family. Plant cellulose synthase-like A subfamily.

Its subcellular location is the golgi apparatus membrane. The catalysed reaction is GDP-mannose + (glucomannan)n = GDP + (glucomannan)n+1.. Functionally, possesses glucomannan synthase and mannan synthase activities in vitro. Mannan synthase consists of a 4-beta-mannosyltransferase activity on mannan using GDP-mannose. The beta-1,4-mannan product is the backbone for galactomannan synthesis by galactomannan galactosyltransferase. Galactomannan is a noncellulosic polysaccharides of plant cell wall. This chain is Glucomannan 4-beta-mannosyltransferase 2, found in Arabidopsis thaliana (Mouse-ear cress).